Here is a 93-residue protein sequence, read N- to C-terminus: Small ribosomal subunit protein uS19 (93 aa).

It belongs to the universal ribosomal protein uS19 family.

Functionally, protein S19 forms a complex with S13 that binds strongly to the 16S ribosomal RNA. This chain is Small ribosomal subunit protein uS19, found in Anaplasma marginale (strain Florida).